Reading from the N-terminus, the 185-residue chain is Peptidyl-tRNA hydrolase (185 aa).

Tyr14 is a tRNA binding site. His19 (proton acceptor) is an active-site residue. Residues Tyr65, Asn67, and Asn113 each coordinate tRNA.

Belongs to the PTH family. In terms of assembly, monomer.

It localises to the cytoplasm. The enzyme catalyses an N-acyl-L-alpha-aminoacyl-tRNA + H2O = an N-acyl-L-amino acid + a tRNA + H(+). In terms of biological role, hydrolyzes ribosome-free peptidyl-tRNAs (with 1 or more amino acids incorporated), which drop off the ribosome during protein synthesis, or as a result of ribosome stalling. Catalyzes the release of premature peptidyl moieties from peptidyl-tRNA molecules trapped in stalled 50S ribosomal subunits, and thus maintains levels of free tRNAs and 50S ribosomes. The polypeptide is Peptidyl-tRNA hydrolase (Rickettsia akari (strain Hartford)).